Consider the following 489-residue polypeptide: N-succinylglutamate 5-semialdehyde dehydrogenase (489 aa).

223–228 (GSSRTG) lines the NAD(+) pocket. Residues Glu246 and Cys280 contribute to the active site.

This sequence belongs to the aldehyde dehydrogenase family. AstD subfamily.

It catalyses the reaction N-succinyl-L-glutamate 5-semialdehyde + NAD(+) + H2O = N-succinyl-L-glutamate + NADH + 2 H(+). It participates in amino-acid degradation; L-arginine degradation via AST pathway; L-glutamate and succinate from L-arginine: step 4/5. In terms of biological role, catalyzes the NAD-dependent reduction of succinylglutamate semialdehyde into succinylglutamate. This chain is N-succinylglutamate 5-semialdehyde dehydrogenase, found in Aeromonas salmonicida (strain A449).